A 424-amino-acid chain; its full sequence is Enolase (424 aa).

Glutamine 163 contacts (2R)-2-phosphoglycerate. Glutamate 204 functions as the Proton donor in the catalytic mechanism. Residues aspartate 241, glutamate 284, and aspartate 311 each contribute to the Mg(2+) site. Positions 336, 365, 366, and 387 each coordinate (2R)-2-phosphoglycerate. The active-site Proton acceptor is the lysine 336.

The protein belongs to the enolase family. Requires Mg(2+) as cofactor.

The protein resides in the cytoplasm. The protein localises to the secreted. It localises to the cell surface. The enzyme catalyses (2R)-2-phosphoglycerate = phosphoenolpyruvate + H2O. The protein operates within carbohydrate degradation; glycolysis; pyruvate from D-glyceraldehyde 3-phosphate: step 4/5. Its function is as follows. Catalyzes the reversible conversion of 2-phosphoglycerate (2-PG) into phosphoenolpyruvate (PEP). It is essential for the degradation of carbohydrates via glycolysis. The polypeptide is Enolase (Dictyoglomus turgidum (strain DSM 6724 / Z-1310)).